We begin with the raw amino-acid sequence, 342 residues long: Thiosulfate/3-mercaptopyruvate sulfurtransferase 2 (342 aa).

Rhodanese domains follow at residues 56 to 173 and 224 to 338; these read GDAD…DVES and EDKT…LPIV. Cysteine 298 functions as the Cysteine persulfide intermediate in the catalytic mechanism.

Expressed in roots, rosette and cauline leaves, stems, flowers and siliques.

It is found in the cytoplasm. The catalysed reaction is thiosulfate + hydrogen cyanide = thiocyanate + sulfite + 2 H(+). It catalyses the reaction 2-oxo-3-sulfanylpropanoate + [thioredoxin]-dithiol = [thioredoxin]-disulfide + hydrogen sulfide + pyruvate + H(+). Functionally, catalyzes the transfer of a sulfur ion from a donor to cyanide or to other thiol compounds. Substrate preference is 3-mercaptopyruvate &gt; thiosulfate. Involved in embryo and seed development. The chain is Thiosulfate/3-mercaptopyruvate sulfurtransferase 2 (STR2) from Arabidopsis thaliana (Mouse-ear cress).